We begin with the raw amino-acid sequence, 356 residues long: UDP-N-acetylglucosamine--N-acetylmuramyl-(pentapeptide) pyrophosphoryl-undecaprenol N-acetylglucosamine transferase (356 aa).

Residues 12-14, Asn-124, Arg-163, Ser-188, Ile-242, and Gln-287 contribute to the UDP-N-acetyl-alpha-D-glucosamine site; that span reads TGG.

The protein belongs to the glycosyltransferase 28 family. MurG subfamily.

The protein localises to the cell inner membrane. The enzyme catalyses di-trans,octa-cis-undecaprenyl diphospho-N-acetyl-alpha-D-muramoyl-L-alanyl-D-glutamyl-meso-2,6-diaminopimeloyl-D-alanyl-D-alanine + UDP-N-acetyl-alpha-D-glucosamine = di-trans,octa-cis-undecaprenyl diphospho-[N-acetyl-alpha-D-glucosaminyl-(1-&gt;4)]-N-acetyl-alpha-D-muramoyl-L-alanyl-D-glutamyl-meso-2,6-diaminopimeloyl-D-alanyl-D-alanine + UDP + H(+). Its pathway is cell wall biogenesis; peptidoglycan biosynthesis. Functionally, cell wall formation. Catalyzes the transfer of a GlcNAc subunit on undecaprenyl-pyrophosphoryl-MurNAc-pentapeptide (lipid intermediate I) to form undecaprenyl-pyrophosphoryl-MurNAc-(pentapeptide)GlcNAc (lipid intermediate II). The polypeptide is UDP-N-acetylglucosamine--N-acetylmuramyl-(pentapeptide) pyrophosphoryl-undecaprenol N-acetylglucosamine transferase (Pseudomonas syringae pv. tomato (strain ATCC BAA-871 / DC3000)).